The following is a 134-amino-acid chain: Iron-sulfur cluster insertion protein ErpA (134 aa).

Residues C47, C126, and C128 each contribute to the iron-sulfur cluster site.

The protein belongs to the HesB/IscA family. As to quaternary structure, homodimer. Iron-sulfur cluster serves as cofactor.

Functionally, required for insertion of 4Fe-4S clusters for at least IspG. The protein is Iron-sulfur cluster insertion protein ErpA of Coxiella burnetii (strain Dugway 5J108-111).